Consider the following 572-residue polypeptide: Proline--tRNA ligase (572 aa).

It belongs to the class-II aminoacyl-tRNA synthetase family. ProS type 1 subfamily. Homodimer.

It localises to the cytoplasm. It catalyses the reaction tRNA(Pro) + L-proline + ATP = L-prolyl-tRNA(Pro) + AMP + diphosphate. Its function is as follows. Catalyzes the attachment of proline to tRNA(Pro) in a two-step reaction: proline is first activated by ATP to form Pro-AMP and then transferred to the acceptor end of tRNA(Pro). As ProRS can inadvertently accommodate and process non-cognate amino acids such as alanine and cysteine, to avoid such errors it has two additional distinct editing activities against alanine. One activity is designated as 'pretransfer' editing and involves the tRNA(Pro)-independent hydrolysis of activated Ala-AMP. The other activity is designated 'posttransfer' editing and involves deacylation of mischarged Ala-tRNA(Pro). The misacylated Cys-tRNA(Pro) is not edited by ProRS. The protein is Proline--tRNA ligase of Edwardsiella ictaluri (strain 93-146).